The sequence spans 156 residues: Deoxyuridine 5'-triphosphate nucleotidohydrolase (156 aa).

Residues 76–78 (RSG), N89, 93–95 (TVD), and K103 each bind substrate.

It belongs to the dUTPase family. The cofactor is Mg(2+).

The catalysed reaction is dUTP + H2O = dUMP + diphosphate + H(+). The protein operates within pyrimidine metabolism; dUMP biosynthesis; dUMP from dCTP (dUTP route): step 2/2. This enzyme is involved in nucleotide metabolism: it produces dUMP, the immediate precursor of thymidine nucleotides and it decreases the intracellular concentration of dUTP so that uracil cannot be incorporated into DNA. The sequence is that of Deoxyuridine 5'-triphosphate nucleotidohydrolase from Rhizobium rhizogenes (strain K84 / ATCC BAA-868) (Agrobacterium radiobacter).